Consider the following 328-residue polypeptide: Beta-ketoacyl-[acyl-carrier-protein] synthase III (328 aa).

Active-site residues include cysteine 122 and histidine 255. The segment at 256–260 (QANVR) is ACP-binding. The active site involves asparagine 285.

It belongs to the thiolase-like superfamily. FabH family. Homodimer.

It localises to the cytoplasm. It carries out the reaction malonyl-[ACP] + acetyl-CoA + H(+) = 3-oxobutanoyl-[ACP] + CO2 + CoA. It functions in the pathway lipid metabolism; fatty acid biosynthesis. Catalyzes the condensation reaction of fatty acid synthesis by the addition to an acyl acceptor of two carbons from malonyl-ACP. Catalyzes the first condensation reaction which initiates fatty acid synthesis and may therefore play a role in governing the total rate of fatty acid production. Possesses both acetoacetyl-ACP synthase and acetyl transacylase activities. Its substrate specificity determines the biosynthesis of branched-chain and/or straight-chain of fatty acids. In Bordetella pertussis (strain Tohama I / ATCC BAA-589 / NCTC 13251), this protein is Beta-ketoacyl-[acyl-carrier-protein] synthase III.